A 400-amino-acid chain; its full sequence is Elongation factor Tu (400 aa).

Residues 10 to 209 (KPHVNIGTIG…VVDKYIPTPQ (200 aa)) form the tr-type G domain. Positions 19–26 (GHVDHGKT) are G1. Position 19-26 (19-26 (GHVDHGKT)) interacts with GTP. Residue Thr26 participates in Mg(2+) binding. The interval 60–64 (GITIN) is G2. The tract at residues 81-84 (DCPG) is G3. Residues 81–85 (DCPGH) and 136–139 (NKVD) each bind GTP. Residues 136-139 (NKVD) are G4. A G5 region spans residues 174–176 (SAL).

This sequence belongs to the TRAFAC class translation factor GTPase superfamily. Classic translation factor GTPase family. EF-Tu/EF-1A subfamily. In terms of assembly, monomer.

The protein localises to the cytoplasm. It carries out the reaction GTP + H2O = GDP + phosphate + H(+). GTP hydrolase that promotes the GTP-dependent binding of aminoacyl-tRNA to the A-site of ribosomes during protein biosynthesis. The sequence is that of Elongation factor Tu from Caldicellulosiruptor saccharolyticus (strain ATCC 43494 / DSM 8903 / Tp8T 6331).